Reading from the N-terminus, the 197-residue chain is MQLKRVAEAKLPTPWGDFLMVGFEEIATGHDHLALVYGDISGSVPVLARVHSECLTGDALFSLRCDCGFQLEAALGHIAEEGRGVLLYHRQEGRNIGLLNKIRAYALQDLGADTVEANHQLGFAADERDFTLCADMFKLLDVDEVRLLTNNPQKVKILNEAGINIVERVPLIVGRNPKNEHYLATKAAKMGHILDMK.

49-53 (RVHSE) provides a ligand contact to GTP. Cys54, Cys65, and Cys67 together coordinate Zn(2+). Residues Gln70, 92–94 (EGR), and Thr114 contribute to the GTP site. Asp126 serves as the catalytic Proton acceptor. The active-site Nucleophile is Arg128. GTP contacts are provided by Thr149 and Lys154.

This sequence belongs to the GTP cyclohydrolase II family. As to quaternary structure, homodimer. Zn(2+) is required as a cofactor.

The enzyme catalyses GTP + 4 H2O = 2,5-diamino-6-hydroxy-4-(5-phosphoribosylamino)-pyrimidine + formate + 2 phosphate + 3 H(+). Its pathway is cofactor biosynthesis; riboflavin biosynthesis; 5-amino-6-(D-ribitylamino)uracil from GTP: step 1/4. Functionally, catalyzes the conversion of GTP to 2,5-diamino-6-ribosylamino-4(3H)-pyrimidinone 5'-phosphate (DARP), formate and pyrophosphate. This is GTP cyclohydrolase-2 from Pectobacterium atrosepticum (strain SCRI 1043 / ATCC BAA-672) (Erwinia carotovora subsp. atroseptica).